Here is a 199-residue protein sequence, read N- to C-terminus: Large ribosomal subunit protein bL25 (199 aa).

This sequence belongs to the bacterial ribosomal protein bL25 family. CTC subfamily. As to quaternary structure, part of the 50S ribosomal subunit; part of the 5S rRNA/L5/L18/L25 subcomplex. Contacts the 5S rRNA. Binds to the 5S rRNA independently of L5 and L18.

Functionally, this is one of the proteins that binds to the 5S RNA in the ribosome where it forms part of the central protuberance. The protein is Large ribosomal subunit protein bL25 of Caulobacter sp. (strain K31).